A 302-amino-acid chain; its full sequence is Protein FdhE homolog (302 aa).

It belongs to the FdhE family.

It is found in the cytoplasm. Functionally, necessary for formate dehydrogenase activity. In Haemophilus influenzae (strain PittGG), this protein is Protein FdhE homolog.